The chain runs to 310 residues: HPr kinase/phosphorylase (310 aa).

Active-site residues include histidine 138 and lysine 159. 153–160 (GASGIGKS) contacts ATP. Residue serine 160 coordinates Mg(2+). Aspartate 177 serves as the catalytic Proton acceptor; for phosphorylation activity. Proton donor; for dephosphorylation activity. An important for the catalytic mechanism of both phosphorylation and dephosphorylation region spans residues 201 to 210 (IEIRGVGIID). Glutamate 202 is a binding site for Mg(2+). Arginine 243 is an active-site residue. The tract at residues 264–269 (PVKTGR) is important for the catalytic mechanism of dephosphorylation.

The protein belongs to the HPrK/P family. Homohexamer. It depends on Mg(2+) as a cofactor.

The catalysed reaction is [HPr protein]-L-serine + ATP = [HPr protein]-O-phospho-L-serine + ADP + H(+). It catalyses the reaction [HPr protein]-O-phospho-L-serine + phosphate + H(+) = [HPr protein]-L-serine + diphosphate. Catalyzes the ATP- as well as the pyrophosphate-dependent phosphorylation of a specific serine residue in HPr, a phosphocarrier protein of the phosphoenolpyruvate-dependent sugar phosphotransferase system (PTS). HprK/P also catalyzes the pyrophosphate-producing, inorganic phosphate-dependent dephosphorylation (phosphorolysis) of seryl-phosphorylated HPr (P-Ser-HPr). The two antagonistic activities of HprK/P are regulated by several intracellular metabolites, which change their concentration in response to the absence or presence of rapidly metabolisable carbon sources (glucose, fructose, etc.) in the growth medium. Therefore, by controlling the phosphorylation state of HPr, HPrK/P is a sensor enzyme that plays a major role in the regulation of carbon metabolism and sugar transport: it mediates carbon catabolite repression (CCR), and regulates PTS-catalyzed carbohydrate uptake and inducer exclusion. The protein is HPr kinase/phosphorylase of Lactococcus lactis subsp. cremoris (strain SK11).